Consider the following 461-residue polypeptide: uncharacterized protein (461 aa).

Transmembrane regions (helical) follow at residues 13 to 33 (GIIF…LPFE), 54 to 74 (ALHV…LGLV), 81 to 101 (VGFA…ATAL), 120 to 140 (GNLF…SMWM), 170 to 190 (VFVL…TLVG), 211 to 231 (YGLP…YIIF), 256 to 276 (FIIF…NPFI), 286 to 306 (IASF…STGV), 314 to 334 (SNTD…SAVL), 349 to 369 (FMID…FIIF), 377 to 397 (TASA…LGMP), 399 to 419 (IGLA…PVAT), and 439 to 459 (VGFL…YMFW).

It belongs to the SLC13A/DASS transporter (TC 2.A.47) family. NADC subfamily.

Its subcellular location is the cell membrane. This is an uncharacterized protein from Haemophilus influenzae (strain ATCC 51907 / DSM 11121 / KW20 / Rd).